A 37-amino-acid polypeptide reads, in one-letter code: EALADPIADPVAGPNPEADPEAINLKAIAAFAKKLLG.

Residues 1–22 (EALADPIADPVAGPNPEADPEA) constitute a propeptide that is removed on maturation. 4 AXPX repeats span residues 4–7 (ADPI), 8–11 (ADPV), 12–15 (AGPN), and 18–21 (ADPE). Leu-36 is subject to Leucine amide.

Belongs to the MCD family. Mastoparan subfamily. Expressed by the venom gland.

The protein resides in the secreted. It is found in the target cell membrane. Antimicrobial peptide with potent activity against both Gram-positive (S.aureus MIC=50 ug/ml, and B.subtilis MIC=25 ug/ml) and Gram-negative bacteria (P.aeruginosa MIC=25 ug/ml, E.coli MIC=3-50 ug/ml, K.pneumoniae MIC=25 ug/ml). Exhibits little hemolytic activity on human erythrocytes. In Vespa tropica (Greater banded hornet), this protein is Mastoparan-VT.